A 147-amino-acid chain; its full sequence is MSLKLYKTSISIFLILLIDQITKYLAIKFLSPDGIVKLLPFLNLVYVENTGTAFGMFKFLGSGFFIIIALVVTGFLVYMYFKDTQNWFIYSLIIAGALGNIIDRLIYGYVIDFIDLHLKNLHWPAFNVADSAISIGIVLFVYKNLKK.

Transmembrane regions (helical) follow at residues 10–30 (ISIFLILLIDQITKYLAIKFL), 34–54 (GIVKLLPFLNLVYVENTGTAF), 59–79 (FLGSGFFIIIALVVTGFLVYM), and 87–107 (WFIYSLIIAGALGNIIDRLIY). Active-site residues include Asp112 and Asp130. The helical transmembrane segment at 121–141 (LHWPAFNVADSAISIGIVLFV) threads the bilayer.

Belongs to the peptidase A8 family.

Its subcellular location is the cell inner membrane. It catalyses the reaction Release of signal peptides from bacterial membrane prolipoproteins. Hydrolyzes -Xaa-Yaa-Zaa-|-(S,diacylglyceryl)Cys-, in which Xaa is hydrophobic (preferably Leu), and Yaa (Ala or Ser) and Zaa (Gly or Ala) have small, neutral side chains.. The protein operates within protein modification; lipoprotein biosynthesis (signal peptide cleavage). Functionally, this protein specifically catalyzes the removal of signal peptides from prolipoproteins. The chain is Lipoprotein signal peptidase from Thermodesulfovibrio yellowstonii (strain ATCC 51303 / DSM 11347 / YP87).